A 212-amino-acid chain; its full sequence is Methylthioribulose-1-phosphate dehydratase (212 aa).

Zn(2+) contacts are provided by H98 and H100.

It belongs to the aldolase class II family. MtnB subfamily. Requires Zn(2+) as cofactor.

It carries out the reaction 5-(methylsulfanyl)-D-ribulose 1-phosphate = 5-methylsulfanyl-2,3-dioxopentyl phosphate + H2O. Its pathway is amino-acid biosynthesis; L-methionine biosynthesis via salvage pathway; L-methionine from S-methyl-5-thio-alpha-D-ribose 1-phosphate: step 2/6. Its function is as follows. Catalyzes the dehydration of methylthioribulose-1-phosphate (MTRu-1-P) into 2,3-diketo-5-methylthiopentyl-1-phosphate (DK-MTP-1-P). The sequence is that of Methylthioribulose-1-phosphate dehydratase from Picosynechococcus sp. (strain ATCC 27264 / PCC 7002 / PR-6) (Agmenellum quadruplicatum).